A 14507-amino-acid chain; its full sequence is Mucin-16 (14507 aa).

The segment covering 1–17 (MLKPSGLPGSSSPTRSL) has biased composition (low complexity). The interval 1–138 (MLKPSGLPGS…PRTRTSSTEG (138 aa)) is disordered. The Extracellular portion of the chain corresponds to 1-14451 (MLKPSGLPGS…EPLTGNSDLP (14451 aa)). Polar residues-rich tracts occupy residues 35–46 (TGATLSPKTSTG) and 56–138 (PFTS…STEG). Asn-139 carries an N-linked (GlcNAc...) asparagine glycan. Disordered stretches follow at residues 160 to 180 (EKYTVPTETSTTEGDSTETPW), 198 to 229 (DSTASKENAPVSMTPAETTVTDSHTPGRTNPS), 265 to 287 (FSSPEPGSAGHSRISTSAPLSSS), 396 to 554 (LGGT…STSV), 655 to 674 (VSKTAAGSSPPGGTKPSYTM), 695 to 719 (SLGLTPLNTRHPFSSPEPDSAGHTK), and 740 to 888 (TSTF…RTTL). The span at 166–178 (TETSTTEGDSTET) shows a compositional bias: low complexity. Polar residues predominate over residues 212 to 229 (PAETTVTDSHTPGRTNPS). Composition is skewed to low complexity over residues 276 to 287 (SRISTSAPLSSS) and 396 to 413 (LGGTSTSALTTTSPSTTL). Polar residues-rich tracts occupy residues 414–423 (VSEETNTHHS), 431–441 (GTLNTSMTPLE), and 460–478 (GFTTLDSKIRSPSQVSSSH). A glycan (N-linked (GlcNAc...) asparagine) is linked at Asn-434. Low complexity-rich tracts occupy residues 485-497 (TTGSTSGRQSSST) and 508-525 (ATTSSTSKASSWTSESTA). Polar residues predominate over residues 526–543 (QQFSEPQHTQWVETSPSM). Composition is skewed to polar residues over residues 696-706 (LGLTPLNTRHP), 740-780 (TSTF…NAAT), 787-796 (NATSPLTHPS), and 805-821 (SVLTLSTSAETTDSPNI). Asn-787 carries an N-linked (GlcNAc...) asparagine glycan. Over residues 823-846 (PTGTLTSESSESPSTLSLPSVSGV) the composition is skewed to low complexity. Polar residues-rich tracts occupy residues 847–860 (KTTFSSSTPSTHLF) and 869–888 (TSNPSVSQPETSVSRVRTTL). N-linked (GlcNAc...) asparagine glycosylation is found at Asn-930 and Asn-957. Polar residues-rich tracts occupy residues 949–969 (SQTNRDTFNDSAAPQSTTWPE), 1092–1101 (GSSTPGRTSQ), 1124–1137 (GTSSALTPQMTATH), and 1301–1317 (SGSSPEMTAPGETNTGS). 6 disordered regions span residues 949–981 (SQTNRDTFNDSAAPQSTTWPETSPRFKTGLPSA), 1082–1101 (VSPSQSMDAAGSSTPGRTSQ), 1121–1149 (PRDGTSSALTPQMTATHPPSPDPGSARST), 1301–1378 (SGSS…NLTS), 1593–1641 (LGTQ…SSSS), and 1704–1757 (LSES…SPTT). Over residues 1318-1328 (TWDPTTYITTT) the composition is skewed to low complexity. Polar residues-rich tracts occupy residues 1334–1347 (SSAQVSTPHSVRTL), 1368–1378 (PKISSSPNLTS), 1596–1613 (QGRSSSEATTFWKPSTDT), 1621–1633 (GPTNIQSTPPMDN), and 1704–1745 (LSES…GSQM). The N-linked (GlcNAc...) asparagine glycan is linked to Asn-1375. Asn-1633 carries an N-linked (GlcNAc...) asparagine glycan. Positions 1746 to 1757 (STSIPLTSSPTT) are enriched in low complexity. Asn-1840, Asn-1877, and Asn-1890 each carry an N-linked (GlcNAc...) asparagine glycan. The span at 1846 to 1908 (DLSHGVHTSS…TEKSEVSSSI (63 aa)) shows a compositional bias: polar residues. 4 disordered regions span residues 1846–1930 (DLSH…PGNR), 2010–2033 (VSASPTHENSVSSGSSTSSPYSSA), 2064–2140 (WPST…GASI), and 2153–2177 (RSDVSGLTSESTANPSLGTASSAGT). Composition is skewed to low complexity over residues 2019–2033 (SVSSGSSTSSPYSSA) and 2064–2085 (WPSTSLSEALSSGHSGVSNPSS). A compositionally biased stretch (polar residues) spans 2111–2132 (HGPQNTAASTLNTDASSVTGLS). Asn-2345 and Asn-2375 each carry an N-linked (GlcNAc...) asparagine glycan. 2 disordered regions span residues 2393-2455 (PTSI…PFTI) and 2566-2591 (SESKAIHSSPQTPTTPTSGANWETSA). Low complexity-rich tracts occupy residues 2417–2429 (TSTTETNTATSPS) and 2566–2583 (SESKAIHSSPQTPTTPTS). Asn-2737 carries N-linked (GlcNAc...) asparagine glycosylation. Disordered regions lie at residues 2789-2822 (TTGSQGMASSGGIRSGSTHSTGTKTFSSLPLTMN), 2838-2885 (TATQ…TWGI), 2901-3006 (DTKS…AMTS), 3019-3052 (TGQAARSGSSSSPISLSTEKETSFLSPTASTSRK), 3083-3148 (TLNM…ASSI), 3172-3235 (SQAA…PETT), 3251-3276 (ALGSGSTSISHLPTGTTSPTKSPTEN), 3299-3392 (GTPG…KTET), 3415-3436 (TSRSVDEAYSSTSSWSDQTSGS), and 3462-3491 (VSLPSGDQGITSLTNPSGGKTSSASSVTSP). Over residues 2803–2819 (SGSTHSTGTKTFSSLPL) the composition is skewed to polar residues. Positions 2864–2875 (SASSSPSKAFAS) are enriched in low complexity. Polar residues-rich tracts occupy residues 2876 to 2885 (LTTAPPTWGI) and 2901 to 2918 (DTKSASLPTPGQSLNTIP). A compositionally biased stretch (low complexity) spans 2919-2931 (DSDASTASSSLSK). Residues 2942–2968 (MTSTKAISASSFQSTGFTETPEGSASP) show a composition bias toward polar residues. Positions 3019–3035 (TGQAARSGSSSSPISLS) are enriched in low complexity. The segment covering 3041–3052 (SFLSPTASTSRK) has biased composition (polar residues). The N-linked (GlcNAc...) asparagine glycan is linked to Asn-3085. A compositionally biased stretch (low complexity) spans 3107 to 3116 (TAETQTLTFT). Polar residues-rich tracts occupy residues 3117-3132 (PSETPTSLLPVSSPTE) and 3172-3181 (SQAAQGNSTW). Residue Asn-3178 is glycosylated (N-linked (GlcNAc...) asparagine). A compositionally biased stretch (low complexity) spans 3188–3200 (TGSSPAGTSPGSP). Composition is skewed to polar residues over residues 3201–3214 (EMSTTLKIMSSKEP) and 3251–3261 (ALGSGSTSISH). Residues 3263 to 3274 (PTGTTSPTKSPT) show a composition bias toward low complexity. Composition is skewed to polar residues over residues 3299-3342 (GTPG…TTGM) and 3360-3383 (VSLSTSSNILEDPVTSPNSVSSLT). Composition is skewed to low complexity over residues 3424–3436 (SSTSSWSDQTSGS) and 3477–3491 (PSGGKTSSASSVTSP). A glycan (N-linked (GlcNAc...) asparagine) is linked at Asn-3501. The span at 3538–3555 (ISTTITTMGTNSISTTTP) shows a compositional bias: low complexity. Disordered regions lie at residues 3538-3588 (ISTT…STAA), 3644-3672 (TPSSDASAVKTETSTSERTLSPSDTTAST), 3794-3829 (RSSGVTFSRPDPTSKKAEQTSTQLPTTTSAHPGQVP), 3843-3879 (AKTPDATFQRQGQTALTTEARATSDSWNEKEKSTPSA), 3914-3982 (LESG…SPVV), 4024-4056 (MDTSSTTQTSIISSPGSTAITKGPRTEITSSKR), 4094-4121 (AMQTSPPGATSLSAPTLDTSATASWTGT), and 4138-4166 (FSKGPEDTSQPSPPSVEETSSSSSLVPIH). Polar residues-rich tracts occupy residues 3812–3824 (QTSTQLPTTTSAH) and 3848–3868 (ATFQRQGQTALTTEARATSDS). The span at 3916 to 3927 (SGTTSSPSWKSS) shows a compositional bias: low complexity. The span at 3946–3982 (PSTNTVETTGWVTSSEHASHSTIPAHSASSKLTSPVV) shows a compositional bias: polar residues. Low complexity predominate over residues 4026–4041 (TSSTTQTSIISSPGST). Positions 4095 to 4121 (MQTSPPGATSLSAPTLDTSATASWTGT) are enriched in polar residues. Over residues 4152–4164 (SVEETSSSSSLVP) the composition is skewed to low complexity. Asn-4220, Asn-4498, Asn-4606, Asn-4613, and Asn-4624 each carry an N-linked (GlcNAc...) asparagine glycan. 3 disordered regions span residues 4728–4748 (VKDVSQTNPPFQDEASSPSSQ), 4845–4961 (HSTV…TRLS), and 5026–5066 (VSWT…KLSS). Polar residues predominate over residues 4856–4876 (KVTSPNVTTSTMEDTTISRSI). Residue Asn-4861 is glycosylated (N-linked (GlcNAc...) asparagine). Composition is skewed to low complexity over residues 4877–4914 (PKSSKTTRTETETTSSLTPKLRETSISQEITSSTETST) and 4924–4939 (TTEVSRTDVTSSSSTS). Composition is skewed to polar residues over residues 4944-4961 (DQSTVSLDISTETNTRLS) and 5026-5037 (VSWTSPPSVDKT). A compositionally biased stretch (low complexity) spans 5038 to 5047 (SSPSSFLSSP). The segment covering 5048–5059 (AMTTPSLISSTL) has biased composition (polar residues). Asn-5096, Asn-5131, and Asn-5228 each carry an N-linked (GlcNAc...) asparagine glycan. Disordered regions lie at residues 5128–5149 (VKANNSGHESHSPALADSETPK), 5221–5249 (EVSSTGVNSSSKISTPDHDKSTVPPDTFT), and 5271–5303 (TQASPPESASHSTLPLDTSTTLSQGGTHSTVTQ). Over residues 5221–5234 (EVSSTGVNSSSKIS) the composition is skewed to polar residues. The segment covering 5280–5293 (SHSTLPLDTSTTLS) has biased composition (low complexity). Polar residues predominate over residues 5294–5303 (QGGTHSTVTQ). The N-linked (GlcNAc...) asparagine glycan is linked to Asn-5320. Disordered stretches follow at residues 5328-5365 (PVEETSSVSSLMSSPAMTSPSPVSSTSPQSIPSSPLPV), 5381-5400 (GTTSPESVTSSPPNLSSITH), 5426-5507 (NVGT…TNTA), 5519-5538 (ASRTEISSSRTSISDLDRPT), 5624-5654 (PVEETSSGFSLMSPSMTSPSPVSSTSPESIP), 5675-5696 (LGTTSPEPVTSSPPNLSSPTQE), and 5727-5747 (ISGHESQSSVPADSHTSKATS). 2 stretches are compositionally biased toward low complexity: residues 5333 to 5365 (SSVSSLMSSPAMTSPSPVSSTSPQSIPSSPLPV) and 5381 to 5393 (GTTSPESVTSSPP). Asn-5394 carries N-linked (GlcNAc...) asparagine glycosylation. Polar residues-rich tracts occupy residues 5426-5441 (NVGTSGSGHKSQSSVL) and 5447-5485 (SKATPLMSTTSTLGDTSVSTSTPNISQTNQIQTEPTASL). N-linked (GlcNAc...) asparagine glycosylation is present at Asn-5470. Composition is skewed to low complexity over residues 5495-5504 (SEKTSSTTET), 5520-5532 (SRTEISSSRTSIS), 5633-5654 (SLMSPSMTSPSPVSSTSPESIP), and 5675-5688 (LGTTSPEPVTSSPP). N-linked (GlcNAc...) asparagine glycosylation is present at Asn-5689. Residues 5727–5737 (ISGHESQSSVP) show a composition bias toward polar residues. Asn-5863 carries an N-linked (GlcNAc...) asparagine glycan. Disordered stretches follow at residues 5882–5931 (STAS…SSPV) and 6054–6078 (STSTPGSPETKNVDRDSTSPLTPEL). A compositionally biased stretch (polar residues) spans 5903–5916 (TTTMSRSTKGVSWQ). Over residues 5917–5928 (SPPSVEETSSPS) the composition is skewed to low complexity. The segment covering 6054–6063 (STSTPGSPET) has biased composition (polar residues). N-linked (GlcNAc...) asparagine glycosylation occurs at Asn-6088. Disordered stretches follow at residues 6122–6149 (PASAQSTKSPDISPEASSSHSNSPPLTI), 6219–6251 (NSLSSQAPLLVTTSPSPVTSTLQEHSTSSLVSV), 6399–6425 (SRTELTSSSRTSIQGTEKPTMSPDTST), 6438–6459 (TKSEERTIATQTGPHRATSQGT), 6497–6545 (ISGT…TSLP), and 6682–6714 (TTGATETSRTEVASSRRTSIPGPDHSTESPDIS). Low complexity-rich tracts occupy residues 6134-6149 (SPEASSSHSNSPPLTI), 6226-6251 (PLLVTTSPSPVTSTLQEHSTSSLVSV), and 6399-6410 (SRTELTSSSRTS). Composition is skewed to polar residues over residues 6411–6425 (IQGTEKPTMSPDTST) and 6445–6459 (IATQTGPHRATSQGT). Residues 6500 to 6523 (TSPPSVEKTSSSSSLLSLPAITSP) are compositionally biased toward low complexity. Composition is skewed to polar residues over residues 6530-6545 (LPESRPSSPVHLTSLP) and 6683-6699 (TGATETSRTEVASSRRT). A glycan (N-linked (GlcNAc...) asparagine) is linked at Asn-6732. Disordered regions lie at residues 6800 to 6822 (SFSSSLMPSPAMTSPPVSSTLPK), 6845 to 6865 (TLGTSPEPTTSSPPNLSSTSH), and 6886 to 6939 (TAAT…SETT). Residues 6848–6864 (TSPEPTTSSPPNLSSTS) are compositionally biased toward low complexity. Asn-6859 carries N-linked (GlcNAc...) asparagine glycosylation. Polar residues predominate over residues 6886-6905 (TAATNVETTSSGHGSQSSVL). A compositionally biased stretch (low complexity) spans 6919 to 6938 (TTSTMGHTTVSTSMSVSSET). The N-linked (GlcNAc...) asparagine glycan is linked to Asn-6961. 14 disordered regions span residues 6981-7004 (AEVSRTEVTSSGRTSIPGPSQSTV), 7028-7107 (MTIP…ATTS), 7143-7208 (TSPE…TSKA), 7279-7302 (SRTEVTSSSRTSISGSAESTMLPE), 7320-7345 (ESSEMTIKTQTSPPGSTSESTFTLDT), 7360-7427 (QRLP…SLLT), 7437-7456 (LDASAEPETSSPPSLSSTSV), 7463-7503 (EVTT…ETTK), 7527-7553 (SNTRKIQSEPASSLTTRLRETSTSEET), 7577-7597 (TEAISFSRTSMSGPEQSTMSQ), 7726-7782 (ATTT…TTSS), 7825-7849 (LASSLTPGLRESSGSEGTSSGTKMS), 7908-7927 (HTSPLGATTQGTSTLDTSST), and 7970-8000 (PSFSLMSSPATTSPSPVSSTLPESISSSPLP). Over residues 7028–7038 (MTIPTQTGPSG) the composition is skewed to polar residues. The span at 7039–7055 (STSQDTLTLDTSTTKSQ) shows a compositional bias: low complexity. Positions 7057–7075 (KTHSTLTQRFPHSEMTTLM) are enriched in polar residues. Positions 7086–7105 (SSPSLENPSSLPSLLSLPAT) are enriched in low complexity. Polar residues predominate over residues 7166–7200 (GKDTTNTEAVHPSTNTAASNVEIPSSGHESPSSAL). Low complexity predominate over residues 7279–7298 (SRTEVTSSSRTSISGSAEST). Composition is skewed to polar residues over residues 7322 to 7345 (SEMTIKTQTSPPGSTSESTFTLDT), 7360 to 7371 (QRLPHSEITTLV), and 7390 to 7402 (SPPSSQLSLSAMI). Low complexity-rich tracts occupy residues 7403–7427 (SPSPVSSTLPASSHSSSASVTSLLT) and 7439–7455 (ASAEPETSSPPSLSSTS). A compositionally biased stretch (polar residues) spans 7474–7484 (FSNTAVTKVGT). A compositionally biased stretch (low complexity) spans 7485 to 7494 (SSSGHESPSS). The segment covering 7733 to 7749 (GTSTEPGTSSSSSLSTT) has biased composition (low complexity). Over residues 7750–7765 (SHERLTTYKDTAHTEA) the composition is skewed to basic and acidic residues. Residues 7768-7782 (PSTNTGGTNVATTSS) show a composition bias toward polar residues. Low complexity-rich tracts occupy residues 7835-7846 (ESSGSEGTSSGT), 7915-7927 (TTQGTSTLDTSST), and 7973-8000 (SLMSSPATTSPSPVSSTLPESISSSPLP). 2 N-linked (GlcNAc...) asparagine glycosylation sites follow: Asn-8029 and Asn-8055. Disordered stretches follow at residues 8042–8078 (EVTTDTEKTHPSSNRTVTDVGTSSSGHESTSFVLADS), 8111–8134 (IQTEPTSSLTLGLRKTSSSEGTSL), 8312–8331 (GISREPGTSSTSNLSSTSHE), 8342–8389 (TEDM…YTMG), 8411–8472 (TSSL…ISPD), 8604–8624 (MLRTSSEPETSSPPNLSSTSA), 8674–8741 (SPMA…TKVS), and 8775–8880 (TPLT…HSSP). The span at 8052 to 8078 (PSSNRTVTDVGTSSSGHESTSFVLADS) shows a compositional bias: polar residues. Residues 8319-8328 (TSSTSNLSST) are compositionally biased toward low complexity. A glycan (N-linked (GlcNAc...) asparagine) is linked at Asn-8324. Residues 8345 to 8389 (MQPSTHTAVTNVRTSISGHESQSSVLSDSETPKATSPMGTTYTMG) show a composition bias toward polar residues. Positions 8607–8624 (TSSEPETSSPPNLSSTSA) are enriched in low complexity. 2 N-linked (GlcNAc...) asparagine glycosylation sites follow: Asn-8618 and Asn-8684. Composition is skewed to polar residues over residues 8674–8740 (SPMA…TTKV) and 8781–8810 (GSAEMTITPKTGHSGASSQGTFTLDTSSRA). A compositionally biased stretch (low complexity) spans 8850 to 8880 (TSPPSSLVSLSAVTSPSPLYSTPSESSHSSP). Asn-8913 carries N-linked (GlcNAc...) asparagine glycosylation. 2 disordered regions span residues 8995–9018 (ESTSTLTPTPRETSTSQEIHSATK) and 9147–9168 (SLSSPVMTSSSPVSSTLPDSIH). Asn-9202 carries an N-linked (GlcNAc...) asparagine glycan. The segment covering 9294 to 9307 (SISEETSSATEKST) has biased composition (low complexity). Positions 9294-9460 (SISEETSSAT…TPSGSSHSSP (167 aa)) are disordered. Composition is skewed to polar residues over residues 9308–9357 (VLSS…STPL) and 9374–9412 (SGATSQGTFTLDSSSTASWPGTHSATTQRFPQSVVTTPM). The segment covering 9431-9460 (SPPSSLVSSSSVTSPSPLYSTPSGSSHSSP) has biased composition (low complexity). An N-linked (GlcNAc...) asparagine glycan is attached at Asn-9493. Disordered regions lie at residues 9611–9635 (ATPEVSRTEVMPSSRTSIPGPAQST), 9726–9753 (SSSSLTSLPLTTSLSPVSSTLLDSSPSS), 9771–9791 (VLDTSSEPKTSSSPNLSSTSV), and 9869–9890 (TEPTFSLTPGFRETSTSEETTS). Over residues 9621–9635 (MPSSRTSIPGPAQST) the composition is skewed to polar residues. Composition is skewed to low complexity over residues 9774 to 9790 (TSSEPKTSSSPNLSSTS) and 9881 to 9890 (ETSTSEETTS). Asn-9785 carries N-linked (GlcNAc...) asparagine glycosylation. Asn-10075 and Asn-10173 each carry an N-linked (GlcNAc...) asparagine glycan. Disordered regions lie at residues 10175–10218 (SLDT…PPAS) and 10445–10469 (TIRPVKGPQTSTSPASPKGLHTGGT). The segment covering 10178 to 10193 (TSSVTPTNTPSSPGST) has biased composition (low complexity). Positions 10194-10212 (HLLQSSKTDFTSSAKTSSP) are enriched in polar residues. Asn-10510 carries N-linked (GlcNAc...) asparagine glycosylation. The segment covering 10544–10573 (SLGAETSTALPRTTPSVFNRESETTASLVS) has biased composition (polar residues). 2 disordered regions span residues 10544–10590 (SLGA…DVSS) and 10689–10719 (ETSSTIPRTIPNFSHHESDATPSIATSPGAE). Asn-10700 is a glycosylation site (N-linked (GlcNAc...) asparagine). Residues 10708-10719 (ATPSIATSPGAE) are compositionally biased toward polar residues. A glycan (N-linked (GlcNAc...) asparagine) is linked at Asn-10749. Residues 10849–10860 (TTPSMTTSHGAE) are compositionally biased toward polar residues. 3 disordered regions span residues 10849 to 10872 (TTPSMTTSHGAESSSAVPTPTVST), 10898 to 10926 (LSPGEPETTPSMATSHGEEASSAIPTPTV), and 11003 to 11036 (LPTLTLSPGEPETTPSMATSHGAEASSTVPTVSP). A compositionally biased stretch (low complexity) spans 10861 to 10872 (SSSAVPTPTVST). The segment covering 11003-11018 (LPTLTLSPGEPETTPS) has biased composition (low complexity). Residue Asn-11053 is glycosylated (N-linked (GlcNAc...) asparagine). The segment at 11072-11092 (SMATSHGAEASSAVPTPTVSP) is disordered. 2 N-linked (GlcNAc...) asparagine glycosylation sites follow: Asn-11224 and Asn-11263. Composition is skewed to polar residues over residues 11269–11284 (HPAESSSTLPRTTSRF) and 11358–11381 (STTVPRTTPNYSHSEPDTTPSIAT). Disordered regions lie at residues 11269–11301 (HPAESSSTLPRTTSRFSHSELDTMPSTVTSPEA), 11358–11400 (STTV…SPDV), 11508–11537 (KFSHSKSDTTLPVAITSPGPEASSAVSTTT), 11583–11724 (ETST…TSPR), 11836–11861 (SPTASPGVSAKTAPLSTHPGTETSTM), and 11913–11937 (QTVTSWNTETSPSVTSVGPPEFSRT). N-linked (GlcNAc...) asparagine glycosylation is present at Asn-11367. 3 stretches are compositionally biased toward polar residues: residues 11583–11594 (ETSTTVSGTIPN), 11631–11651 (VTSQVTSSATDTSTAIPTLTP), and 11658–11672 (TTASSATHPGTQTGF). A glycan (N-linked (GlcNAc...) asparagine) is linked at Asn-11594. Positions 11700 to 11717 (PVSRTTSSFSHSSPDATP) are enriched in low complexity. Polar residues-rich tracts occupy residues 11849–11861 (PLSTHPGTETSTM) and 11913–11928 (QTVTSWNTETSPSVTS). Repeat copies occupy residues 12067-12223 (AATV…PSPT), 12224-12381 (TAGP…PTIM), 12382-12537 (AAGP…PSPA), 12538-12692 (TAGP…PSPT), 12693-12848 (TAGP…PSPT), 12849-13004 (SAGP…PSPT), 13005-13160 (TAVP…PSPT), 13161-13316 (TTGP…PGPT), 13317-13472 (ATGP…SGPM), 13473-13628 (TASP…PGPS), 13629-13784 (AASP…FGPS), and 13785-13939 (AASH…RYMA). The 12 X approximate tandem repeats stretch occupies residues 12067–13939 (AATVPFMVPF…FTINNLRYMA (1873 aa)). In terms of domain architecture, SEA 1 spans 12072–12193 (FMVPFTLNFT…NSLYVNGFTH (122 aa)). N-linked (GlcNAc...) asparagine glycans are attached at residues Asn-12079, Asn-12100, and Asn-12116. Cys-12126 and Cys-12146 are oxidised to a cystine. An N-linked (GlcNAc...) asparagine glycan is attached at Asn-12168. The interval 12196–12226 (SMPTTSTPGTSTVDVGTSGTPSSSPSPTTAG) is disordered. The 122-residue stretch at 12228 to 12349 (LLMPFTLNFT…NSLYVNGFTH (122 aa)) folds into the SEA 2 domain. N-linked (GlcNAc...) asparagine glycans are attached at residues Asn-12235 and Asn-12272. Cys-12282 and Cys-12302 are disulfide-bonded. The tract at residues 12353–12376 (VSTTSTPGTSTVDLRTSGTPSSLS) is disordered. 3 consecutive SEA domains span residues 12386 to 12507 (LLVP…GFTH), 12542 to 12663 (LLVL…GFTH), and 12697 to 12818 (LLVP…GFTH). Asn-12393, Asn-12414, and Asn-12430 each carry an N-linked (GlcNAc...) asparagine glycan. Cys-12440 and Cys-12460 are oxidised to a cystine. N-linked (GlcNAc...) asparagine glycans are attached at residues Asn-12549, Asn-12570, and Asn-12586. An intrachain disulfide couples Cys-12596 to Cys-12616. Residues Asn-12704, Asn-12725, and Asn-12741 are each glycosylated (N-linked (GlcNAc...) asparagine). A disulfide bridge connects residues Cys-12751 and Cys-12771. Over residues 12819-12834 (QTSAPNTSTPGTSTVD) the composition is skewed to polar residues. A disordered region spans residues 12819–12849 (QTSAPNTSTPGTSTVDLGTSGTPSSLPSPTS). Asn-12824 is a glycosylation site (N-linked (GlcNAc...) asparagine). The span at 12835-12849 (LGTSGTPSSLPSPTS) shows a compositional bias: low complexity. One can recognise an SEA 6 domain in the interval 12853 to 12974 (LLVPFTLNFT…NSLYVNGFTH (122 aa)). N-linked (GlcNAc...) asparagine glycosylation is found at Asn-12860, Asn-12881, and Asn-12897. Cys-12907 and Cys-12927 form a disulfide bridge. Residues 12978–12990 (VAPTSTPGTSTVD) show a composition bias toward polar residues. Residues 12978–13003 (VAPTSTPGTSTVDLGTSGTPSSLPSP) form a disordered region. Over residues 12991 to 13003 (LGTSGTPSSLPSP) the composition is skewed to low complexity. SEA domains lie at 13009-13130 (LLVP…GFTH) and 13165-13286 (LLVP…GFTQ). 3 N-linked (GlcNAc...) asparagine glycosylation sites follow: Asn-13016, Asn-13037, and Asn-13053. Residues Cys-13063 and Cys-13083 are joined by a disulfide bond. Residues Asn-13172 and Asn-13193 are each glycosylated (N-linked (GlcNAc...) asparagine). Residues Cys-13219 and Cys-13239 are joined by a disulfide bond. Residues 13291 to 13313 (PTTSTPGTFTVQPETSETPSSLP) are compositionally biased toward polar residues. Residues 13291 to 13317 (PTTSTPGTFTVQPETSETPSSLPGPTA) form a disordered region. SEA domains lie at 13321-13442 (VLLP…GFTH) and 13477-13598 (LLVL…GFTQ). N-linked (GlcNAc...) asparagine glycans are attached at residues Asn-13328, Asn-13349, and Asn-13365. An intrachain disulfide couples Cys-13375 to Cys-13395. 3 N-linked (GlcNAc...) asparagine glycosylation sites follow: Asn-13484, Asn-13505, and Asn-13521. Cys-13531 and Cys-13551 are disulfide-bonded. A compositionally biased stretch (polar residues) spans 13603 to 13621 (PTTSIPGTPTVDLGTSGTP). Residues 13603–13625 (PTTSIPGTPTVDLGTSGTPVSKP) form a disordered region. SEA domains lie at 13633–13754 (LLVL…GFTH), 13789–13909 (LLIL…GFTH), 13922–14043 (SEEP…GYNE), and 14073–14193 (HLKT…GYAP). Asn-13640 and Asn-13661 each carry an N-linked (GlcNAc...) asparagine glycan. Residues Cys-13687 and Cys-13707 are joined by a disulfide bond. N-linked (GlcNAc...) asparagine glycans are attached at residues Asn-13733, Asn-13744, Asn-13796, Asn-13816, Asn-13832, Asn-13929, and Asn-13950. A disulfide bridge links Cys-13976 with Cys-13996. N-linked (GlcNAc...) asparagine glycosylation is found at Asn-14080 and Asn-14100. An intrachain disulfide couples Cys-14126 to Cys-14146. N-linked (GlcNAc...) asparagine glycosylation is found at Asn-14195, Asn-14212, Asn-14254, Asn-14287, Asn-14326, and Asn-14363. SEA domains follow at residues 14198-14309 (IRGE…EMES) and 14319-14438 (STQH…GYSP). An intrachain disulfide couples Cys-14373 to Cys-14393. N-linked (GlcNAc...) asparagine glycosylation is found at Asn-14417 and Asn-14423. Residues 14452 to 14472 (FWAVILIGLAGLLGVITCLIC) traverse the membrane as a helical segment. Topologically, residues 14473–14507 (GVLVTTRRRKKEGEYNVQQQCPGYYQSHLDLEDLQ) are cytoplasmic.

Binds to MSLN. Binding to MSLN mediates heterotypic cell adhesion. This may contribute to the metastasis of ovarian cancer to the peritoneum by initiating cell attachment to the mesothelial epithelium via binding to MSLN. In terms of processing, heavily O-glycosylated; expresses both type 1 and type 2 core glycans. Heavily N-glycosylated; expresses primarily high mannose and complex bisecting type N-linked glycans. Post-translationally, may be phosphorylated. Phosphorylation of the intracellular C-terminal domain may induce proteolytic cleavage and the liberation of the extracellular domain into the extracellular space. In terms of processing, may contain numerous disulfide bridges. Association of several molecules of the secreted form may occur through interchain disulfide bridges providing an extraordinarily large gel-like matrix in the extracellular space or in the lumen of secretory ducts. Expressed in corneal and conjunctival epithelia (at protein level). Overexpressed in ovarian carcinomas and ovarian low malignant potential (LMP) tumors as compared to the expression in normal ovarian tissue and ovarian adenomas.

The protein localises to the cell membrane. It is found in the secreted. The protein resides in the extracellular space. Thought to provide a protective, lubricating barrier against particles and infectious agents at mucosal surfaces. This is Mucin-16 from Homo sapiens (Human).